The following is a 533-amino-acid chain: WD repeat-containing protein JIP5 (533 aa).

5 WD repeats span residues 26 to 67, 84 to 130, 176 to 215, 264 to 309, and 372 to 409; these read NYSD…EKQS, GKVS…GSCR, NSNDSITKLCHSATNSCLLAGTENGHVLVYDSKNLGGSKL, NQDD…FMDQ, and GAADEVGLLEIDYDYRLISAGMESLKIWSNEQNEEIAL. 2 stretches are compositionally biased toward acidic residues: residues 408-428 and 437-452; these read ALDESDDSDDESDSDNSEDDL and ASDEEIEENKEEEDEK. A disordered region spans residues 408 to 533; the sequence is ALDESDDSDD…EHGIRRFDDL (126 aa). Composition is skewed to basic and acidic residues over residues 453–463 and 521–533; these read EDKPVKIDHPL and QKHEHGIRRFDDL.

It belongs to the WD repeat WDR55 family.

The protein resides in the nucleus. It localises to the nucleolus. In Scheffersomyces stipitis (strain ATCC 58785 / CBS 6054 / NBRC 10063 / NRRL Y-11545) (Yeast), this protein is WD repeat-containing protein JIP5 (JIP5).